The following is a 131-amino-acid chain: Small ribosomal subunit protein bS6 (131 aa).

A disordered region spans residues 99–131; it reads ASPMVKAKDERRERREDFATETNEDSDAGDSEE. Positions 104-116 are enriched in basic and acidic residues; the sequence is KAKDERRERREDF. The segment covering 120 to 131 has biased composition (acidic residues); that stretch reads TNEDSDAGDSEE.

It belongs to the bacterial ribosomal protein bS6 family.

Functionally, binds together with bS18 to 16S ribosomal RNA. This Sodalis glossinidius (strain morsitans) protein is Small ribosomal subunit protein bS6.